Here is a 424-residue protein sequence, read N- to C-terminus: Alkaline nuclease (424 aa).

Belongs to the baculo-herpesviridae alkaline nuclease family. Interacts with LEF-3.

The protein resides in the host nucleus. Functionally, may play a role in maturation and encapsidation of viral replicated genome, by promoting DNA homologous recombination. Exhibits endonuclease and 5'-&gt;3' exonuclease activities. The endonuclease activity displays a specificity for ssDNA in vitro. The polypeptide is Alkaline nuclease (ALK-EXO) (Orgyia pseudotsugata (Douglas-fir tussock moth)).